Consider the following 440-residue polypeptide: Chromosome partition protein MukF (440 aa).

Residues 208 to 236 (LSETSGTLRELQDTLDAAGDKLQANLLRI) form a leucine-zipper region.

Belongs to the MukF family. As to quaternary structure, interacts, and probably forms a ternary complex, with MukE and MukB via its C-terminal region. The complex formation is stimulated by calcium or magnesium. It is required for an interaction between MukE and MukB.

Its subcellular location is the cytoplasm. The protein resides in the nucleoid. Its function is as follows. Involved in chromosome condensation, segregation and cell cycle progression. May participate in facilitating chromosome segregation by condensation DNA from both sides of a centrally located replisome during cell division. Not required for mini-F plasmid partitioning. Probably acts via its interaction with MukB and MukE. Overexpression results in anucleate cells. It has a calcium binding activity. The chain is Chromosome partition protein MukF from Klebsiella pneumoniae (strain 342).